A 621-amino-acid polypeptide reads, in one-letter code: Putative 5'-3' exonuclease R528 (621 aa).

It belongs to the 5'-3' exonuclease family.

It localises to the virion. This is Putative 5'-3' exonuclease R528 from Acanthamoeba polyphaga mimivirus (APMV).